A 727-amino-acid chain; its full sequence is Phosphoribosylformylglycinamidine synthase subunit PurL (727 aa).

Residue histidine 47 is part of the active site. ATP-binding residues include tyrosine 50 and lysine 89. Residue glutamate 91 participates in Mg(2+) binding. Residues 92-95 (SHNH) and arginine 114 contribute to the substrate site. Histidine 93 functions as the Proton acceptor in the catalytic mechanism. A Mg(2+)-binding site is contributed by aspartate 115. Substrate is bound at residue glutamine 238. A Mg(2+)-binding site is contributed by aspartate 266. 310 to 312 (ESQ) lines the substrate pocket. Residues aspartate 490 and glycine 527 each contribute to the ATP site. Asparagine 528 is a Mg(2+) binding site. A substrate-binding site is contributed by serine 530.

The protein belongs to the FGAMS family. In terms of assembly, monomer. Part of the FGAM synthase complex composed of 1 PurL, 1 PurQ and 2 PurS subunits.

The protein localises to the cytoplasm. It catalyses the reaction N(2)-formyl-N(1)-(5-phospho-beta-D-ribosyl)glycinamide + L-glutamine + ATP + H2O = 2-formamido-N(1)-(5-O-phospho-beta-D-ribosyl)acetamidine + L-glutamate + ADP + phosphate + H(+). It participates in purine metabolism; IMP biosynthesis via de novo pathway; 5-amino-1-(5-phospho-D-ribosyl)imidazole from N(2)-formyl-N(1)-(5-phospho-D-ribosyl)glycinamide: step 1/2. Functionally, part of the phosphoribosylformylglycinamidine synthase complex involved in the purines biosynthetic pathway. Catalyzes the ATP-dependent conversion of formylglycinamide ribonucleotide (FGAR) and glutamine to yield formylglycinamidine ribonucleotide (FGAM) and glutamate. The FGAM synthase complex is composed of three subunits. PurQ produces an ammonia molecule by converting glutamine to glutamate. PurL transfers the ammonia molecule to FGAR to form FGAM in an ATP-dependent manner. PurS interacts with PurQ and PurL and is thought to assist in the transfer of the ammonia molecule from PurQ to PurL. The polypeptide is Phosphoribosylformylglycinamidine synthase subunit PurL (Acidiphilium cryptum (strain JF-5)).